We begin with the raw amino-acid sequence, 203 residues long: Putative 3-methyladenine DNA glycosylase (203 aa).

It belongs to the DNA glycosylase MPG family.

In Clostridium botulinum (strain Langeland / NCTC 10281 / Type F), this protein is Putative 3-methyladenine DNA glycosylase.